Here is a 471-residue protein sequence, read N- to C-terminus: UDP-N-acetylmuramate--L-alanine ligase (471 aa).

122–128 (GTHGKTT) serves as a coordination point for ATP.

Belongs to the MurCDEF family.

It localises to the cytoplasm. The enzyme catalyses UDP-N-acetyl-alpha-D-muramate + L-alanine + ATP = UDP-N-acetyl-alpha-D-muramoyl-L-alanine + ADP + phosphate + H(+). It participates in cell wall biogenesis; peptidoglycan biosynthesis. Functionally, cell wall formation. In Cutibacterium acnes (strain DSM 16379 / KPA171202) (Propionibacterium acnes), this protein is UDP-N-acetylmuramate--L-alanine ligase.